The following is a 64-amino-acid chain: Large ribosomal subunit protein bL35 (64 aa).

The protein belongs to the bacterial ribosomal protein bL35 family.

This is Large ribosomal subunit protein bL35 from Helicobacter hepaticus (strain ATCC 51449 / 3B1).